The following is a 370-amino-acid chain: ADP-ribosylation factor-like protein 13B (370 aa).

S-palmitoyl cysteine attachment occurs at residues cysteine 12, cysteine 13, cysteine 14, and cysteine 15. Residues 31–38 (GIGSAGKT), 75–79 (DVGGD), and 134–137 (NNQN) contribute to the GTP site. Lysine 239 participates in a covalent cross-link: Glycyl lysine isopeptide (Lys-Gly) (interchain with G-Cter in SUMO). A disordered region spans residues 255 to 331 (RNQPPVQPPI…PVSPESNSVK (77 aa)). Residues 259–271 (PVQPPIPPDPPSD) show a composition bias toward pro residues. Polar residues-rich tracts occupy residues 287–303 (LASS…TPET) and 314–328 (RISQ…PESN). Lysine 331 is covalently cross-linked (Glycyl lysine isopeptide (Lys-Gly) (interchain with G-Cter in SUMO)). Residues 366-369 (RVVP) are RVVP region.

It belongs to the small GTPase superfamily. Arf family. Monomer. Sumoylation regulates the targeting of membrane sensory receptors to the cilium. Specifically expressed in ciliated sensory neurons throughout development in both hermaphrodites.

Its subcellular location is the cell projection. The protein localises to the cilium membrane. In terms of biological role, cilium-specific protein required to control the microtubule-based, ciliary axoneme structure. Required for normal sensory cilium function. May act by maintaining the association between IFT subcomplexes A and B. This Caenorhabditis elegans protein is ADP-ribosylation factor-like protein 13B (arl-13).